We begin with the raw amino-acid sequence, 144 residues long: Small ribosomal subunit protein uS19 (144 aa).

This sequence belongs to the universal ribosomal protein uS19 family.

Functionally, protein S19 forms a complex with S13 that binds strongly to the 16S ribosomal RNA. The protein is Small ribosomal subunit protein uS19 (rps19) of Aeropyrum pernix (strain ATCC 700893 / DSM 11879 / JCM 9820 / NBRC 100138 / K1).